Here is a 394-residue protein sequence, read N- to C-terminus: Actin-related protein 2 (394 aa).

The residue at position 1 (methionine 1) is an N-acetylmethionine. ATP contacts are provided by residues glycine 160–glycine 162 and arginine 214–glutamate 218. At lysine 299 the chain carries N6-acetyllysine. An ATP-binding site is contributed by glycine 305–tyrosine 310. Lysine 322 is subject to N6-acetyllysine.

It belongs to the actin family. ARP2 subfamily. Component of the Arp2/3 complex composed of ACTR2/ARP2, ACTR3/ARP3, ARPC1B/p41-ARC, ARPC2/p34-ARC, ARPC3/p21-ARC, ARPC4/p20-ARC and ARPC5/p16-ARC. Interacts with AVIL.

The protein resides in the cytoplasm. It localises to the cytoskeleton. Its subcellular location is the cell projection. The protein localises to the nucleus. Functionally, ATP-binding component of the Arp2/3 complex, a multiprotein complex that mediates actin polymerization upon stimulation by nucleation-promoting factor (NPF). The Arp2/3 complex mediates the formation of branched actin networks in the cytoplasm, providing the force for cell motility. Seems to contact the pointed end of the daughter actin filament. In podocytes, required for the formation of lamellipodia downstream of AVIL and PLCE1 regulation. In addition to its role in the cytoplasmic cytoskeleton, the Arp2/3 complex also promotes actin polymerization in the nucleus, thereby regulating gene transcription and repair of damaged DNA. The Arp2/3 complex promotes homologous recombination (HR) repair in response to DNA damage by promoting nuclear actin polymerization, leading to drive motility of double-strand breaks (DSBs). This chain is Actin-related protein 2 (ACTR2), found in Bos taurus (Bovine).